We begin with the raw amino-acid sequence, 215 residues long: Chymomexicain (215 aa).

3 disulfides stabilise this stretch: Cys-22–Cys-63, Cys-56–Cys-96, and Cys-154–Cys-201. Cys-25 is a catalytic residue. Residues His-160 and Asn-176 contribute to the active site.

Belongs to the peptidase C1 family.

Cysteine protease. This is Chymomexicain from Jacaratia mexicana (Wild papaya).